The sequence spans 559 residues: Cellulose biosynthesis protein BcsG (559 aa).

The next 4 membrane-spanning stretches (helical) occupy residues 34 to 54 (LLWAGYLNFHPLLNLVFAAFL), 68 to 88 (HWIALPIGFALFWHDTWLPGP), 113 to 133 (FINWQMIGAIFVLLVAWLFLS), and 138 to 158 (ITVFVVAILLWLNVLTLAGPS).

The protein resides in the cell inner membrane. The polypeptide is Cellulose biosynthesis protein BcsG (bcsG) (Escherichia coli (strain K12)).